The primary structure comprises 125 residues: Oxytocin-neurophysin 1 (125 aa).

An N-terminal signal peptide occupies residues 1–19; sequence MAGPSLACCLLGLLALTSA. An intrachain disulfide couples cysteine 20 to cysteine 25. A Glycine amide modification is found at glycine 28. 7 disulfide bridges follow: cysteine 41–cysteine 85, cysteine 44–cysteine 58, cysteine 52–cysteine 75, cysteine 59–cysteine 65, cysteine 92–cysteine 104, cysteine 98–cysteine 116, and cysteine 105–cysteine 110.

It belongs to the vasopressin/oxytocin family. As to quaternary structure, interacts with oxytocin receptor (Ki=1.5 nM). Interacts with vasopressin V1aR/AVPR1A (Ki=37 nM), V1bR/AVPR1B (Ki=222 nM) and V2R/AVPR2 receptors (Ki=823 nM).

It localises to the secreted. In terms of biological role, neurophysin 1 specifically binds oxytocin. Functionally, oxytocin causes contraction of the smooth muscle of the uterus and of the mammary gland. Acts by binding to oxytocin receptor (OXTR). This chain is Oxytocin-neurophysin 1 (OXT), found in Homo sapiens (Human).